The following is a 455-amino-acid chain: Ribulose bisphosphate carboxylase large chain (455 aa).

Lys-5 bears the N6,N6,N6-trimethyllysine mark. Substrate contacts are provided by Asn-114 and Thr-164. The active-site Proton acceptor is the Lys-166. Lys-168 is a substrate binding site. Lys-192, Asp-194, and Glu-195 together coordinate Mg(2+). Lys-192 carries the N6-carboxylysine modification. His-285 serves as the catalytic Proton acceptor. Residues Arg-286, His-318, and Ser-370 each coordinate substrate.

This sequence belongs to the RuBisCO large chain family. Type I subfamily. As to quaternary structure, heterohexadecamer of 8 large chains and 8 small chains; disulfide-linked. The disulfide link is formed within the large subunit homodimers. The cofactor is Mg(2+). In terms of processing, the disulfide bond which can form in the large chain dimeric partners within the hexadecamer appears to be associated with oxidative stress and protein turnover.

The protein resides in the plastid. Its subcellular location is the chloroplast. It catalyses the reaction 2 (2R)-3-phosphoglycerate + 2 H(+) = D-ribulose 1,5-bisphosphate + CO2 + H2O. It carries out the reaction D-ribulose 1,5-bisphosphate + O2 = 2-phosphoglycolate + (2R)-3-phosphoglycerate + 2 H(+). In terms of biological role, ruBisCO catalyzes two reactions: the carboxylation of D-ribulose 1,5-bisphosphate, the primary event in carbon dioxide fixation, as well as the oxidative fragmentation of the pentose substrate in the photorespiration process. Both reactions occur simultaneously and in competition at the same active site. In Brownea coccinea (Rose of Venezuela), this protein is Ribulose bisphosphate carboxylase large chain.